The primary structure comprises 463 residues: Succinate--CoA ligase [ADP-forming] subunit beta, mitochondrial (463 aa).

Residues 1-53 constitute a mitochondrion transit peptide; the sequence is MAASVFYGRLLAVATLRNHRPRTALGAAAQVLGSSGLFNNHGLQVQQQQQRNL. Positions 61–288 constitute an ATP-grasp domain; sequence MELLQEAGVS…SNSAYRQKKI (228 aa). Lysine 78 is modified (N6-acetyllysine). A Phosphotyrosine modification is found at tyrosine 84. At lysine 88 the chain carries N6-acetyllysine; alternate. Lysine 88 carries the N6-succinyllysine; alternate modification. ATP contacts are provided by residues lysine 98 and 105–107; that span reads GRG. An N6-acetyllysine mark is found at lysine 129, lysine 139, lysine 143, and lysine 216. Mg(2+) contacts are provided by asparagine 258 and aspartate 272. Serine 279 carries the phosphoserine modification. Asparagine 323 serves as a coordination point for substrate. Phosphothreonine is present on threonine 341. Residue lysine 368 is modified to N6-acetyllysine. 380-382 serves as a coordination point for substrate; the sequence is GIM.

Belongs to the succinate/malate CoA ligase beta subunit family. ATP-specific subunit beta subfamily. Heterodimer of an alpha and a beta subunit. The beta subunit determines specificity for ATP. Interacts with ALAS2. The cofactor is Mg(2+).

It is found in the mitochondrion. The enzyme catalyses succinate + ATP + CoA = succinyl-CoA + ADP + phosphate. The protein operates within carbohydrate metabolism; tricarboxylic acid cycle; succinate from succinyl-CoA (ligase route): step 1/1. ATP-specific succinyl-CoA synthetase functions in the citric acid cycle (TCA), coupling the hydrolysis of succinyl-CoA to the synthesis of ATP and thus represents the only step of substrate-level phosphorylation in the TCA. The beta subunit provides nucleotide specificity of the enzyme and binds the substrate succinate, while the binding sites for coenzyme A and phosphate are found in the alpha subunit. The polypeptide is Succinate--CoA ligase [ADP-forming] subunit beta, mitochondrial (Macaca fascicularis (Crab-eating macaque)).